The chain runs to 527 residues: Arginine--tRNA ligase (527 aa).

The short motif at 111–121 (ANPTGPLHIGH) is the 'HIGH' region element.

The protein belongs to the class-I aminoacyl-tRNA synthetase family. Monomer.

Its subcellular location is the cytoplasm. It carries out the reaction tRNA(Arg) + L-arginine + ATP = L-arginyl-tRNA(Arg) + AMP + diphosphate. The chain is Arginine--tRNA ligase from Campylobacter concisus (strain 13826).